We begin with the raw amino-acid sequence, 445 residues long: Phosphoglucosamine mutase (445 aa).

Ser102 acts as the Phosphoserine intermediate in catalysis. Mg(2+) contacts are provided by Ser102, Asp241, Asp243, and Asp245. Ser102 carries the post-translational modification Phosphoserine.

This sequence belongs to the phosphohexose mutase family. It depends on Mg(2+) as a cofactor. Post-translationally, activated by phosphorylation.

The catalysed reaction is alpha-D-glucosamine 1-phosphate = D-glucosamine 6-phosphate. Catalyzes the conversion of glucosamine-6-phosphate to glucosamine-1-phosphate. This Novosphingobium aromaticivorans (strain ATCC 700278 / DSM 12444 / CCUG 56034 / CIP 105152 / NBRC 16084 / F199) protein is Phosphoglucosamine mutase.